The sequence spans 331 residues: Glyceraldehyde-3-phosphate dehydrogenase (331 aa).

Residues 10–11 (RI), aspartate 31, lysine 75, and threonine 117 each bind NAD(+). D-glyceraldehyde 3-phosphate is bound by residues 148 to 150 (SCT) and threonine 179. The active-site Nucleophile is cysteine 149. Asparagine 180 serves as a coordination point for NAD(+). D-glyceraldehyde 3-phosphate is bound by residues arginine 194, 207-208 (TG), and arginine 230. Asparagine 311 contacts NAD(+).

The protein belongs to the glyceraldehyde-3-phosphate dehydrogenase family. As to quaternary structure, homotetramer.

The protein localises to the cytoplasm. It carries out the reaction D-glyceraldehyde 3-phosphate + phosphate + NAD(+) = (2R)-3-phospho-glyceroyl phosphate + NADH + H(+). It functions in the pathway carbohydrate degradation; glycolysis; pyruvate from D-glyceraldehyde 3-phosphate: step 1/5. Functionally, catalyzes the oxidative phosphorylation of glyceraldehyde 3-phosphate (G3P) to 1,3-bisphosphoglycerate (BPG) using the cofactor NAD. The first reaction step involves the formation of a hemiacetal intermediate between G3P and a cysteine residue, and this hemiacetal intermediate is then oxidized to a thioester, with concomitant reduction of NAD to NADH. The reduced NADH is then exchanged with the second NAD, and the thioester is attacked by a nucleophilic inorganic phosphate to produce BPG. The protein is Glyceraldehyde-3-phosphate dehydrogenase (gap) of Thermus aquaticus.